Here is a 478-residue protein sequence, read N- to C-terminus: Putative multidrug resistance outer membrane protein MdtQ (478 aa).

An N-terminal signal peptide occupies residues 1-21; the sequence is MNRDSFYPAIACFPLLLMLAG. A lipid anchor (N-palmitoyl cysteine) is attached at C22. C22 carries the S-diacylglycerol cysteine lipid modification.

The protein belongs to the outer membrane factor (OMF) (TC 1.B.17) family.

It is found in the cell outer membrane. Functionally, could be involved in resistance to puromycin, acriflavine and tetraphenylarsonium chloride. This Escherichia coli (strain K12) protein is Putative multidrug resistance outer membrane protein MdtQ (mdtQ).